We begin with the raw amino-acid sequence, 260 residues long: Phosphatidylglycerol--prolipoprotein diacylglyceryl transferase (260 aa).

4 helical membrane passes run 17-37 (VVKWYGIMMALGVIALVSWIF), 52-72 (LTAAIIAIPSGIIFSKLLHVI), 85-105 (ILSGEGLTIFGAIIGATIGLW), and 113-133 (FNLGYLLDVAVPGILLGQAIG). R134 is an a 1,2-diacyl-sn-glycero-3-phospho-(1'-sn-glycerol) binding site. Transmembrane regions (helical) follow at residues 170–190 (VPTQAYEIIFLLCLFAFSLFI), 198–218 (GQLFLLYISLYAAWRVAIGFV), and 227–247 (GLEQAQVVGLILIALAVPFFI).

It belongs to the Lgt family.

It is found in the cell membrane. It catalyses the reaction L-cysteinyl-[prolipoprotein] + a 1,2-diacyl-sn-glycero-3-phospho-(1'-sn-glycerol) = an S-1,2-diacyl-sn-glyceryl-L-cysteinyl-[prolipoprotein] + sn-glycerol 1-phosphate + H(+). It participates in protein modification; lipoprotein biosynthesis (diacylglyceryl transfer). Its function is as follows. Catalyzes the transfer of the diacylglyceryl group from phosphatidylglycerol to the sulfhydryl group of the N-terminal cysteine of a prolipoprotein, the first step in the formation of mature lipoproteins. The polypeptide is Phosphatidylglycerol--prolipoprotein diacylglyceryl transferase (Dehalococcoides mccartyi (strain ATCC BAA-2266 / KCTC 15142 / 195) (Dehalococcoides ethenogenes (strain 195))).